Consider the following 75-residue polypeptide: Small ribosomal subunit protein bS16 (75 aa).

Belongs to the bacterial ribosomal protein bS16 family.

The sequence is that of Small ribosomal subunit protein bS16 from Aliarcobacter butzleri (strain RM4018) (Arcobacter butzleri).